The primary structure comprises 378 residues: O-glycoside alpha-1,2-mannosyltransferase homolog 3 (378 aa).

Residues 1–6 (MGIPKS) lie on the Cytoplasmic side of the membrane. A helical; Signal-anchor for type II membrane protein membrane pass occupies residues 7-24 (SIYFCILLFCIISFYLQS). The Lumenal portion of the chain corresponds to 25–378 (SKDGPKELKV…AIKWLENINS (354 aa)). Glutamate 276 acts as the Nucleophile in catalysis.

This sequence belongs to the glycosyltransferase 15 family.

Its subcellular location is the endoplasmic reticulum membrane. The protein resides in the golgi apparatus membrane. In terms of biological role, probable mannosyltransferase involved in O-glycosylation of cell wall and secreted proteins. The sequence is that of O-glycoside alpha-1,2-mannosyltransferase homolog 3 (omh3) from Schizosaccharomyces pombe (strain 972 / ATCC 24843) (Fission yeast).